Reading from the N-terminus, the 436-residue chain is 3-ketoacyl-CoA thiolase (436 aa).

Catalysis depends on Cys-99, which acts as the Acyl-thioester intermediate. Residues His-392 and Cys-422 each act as proton acceptor in the active site.

Belongs to the thiolase-like superfamily. Thiolase family. As to quaternary structure, heterotetramer of two alpha chains (FadJ) and two beta chains (FadI).

The protein localises to the cytoplasm. It carries out the reaction an acyl-CoA + acetyl-CoA = a 3-oxoacyl-CoA + CoA. The protein operates within lipid metabolism; fatty acid beta-oxidation. Functionally, catalyzes the final step of fatty acid oxidation in which acetyl-CoA is released and the CoA ester of a fatty acid two carbons shorter is formed. In Escherichia coli O157:H7, this protein is 3-ketoacyl-CoA thiolase.